Reading from the N-terminus, the 100-residue chain is Urease subunit gamma (100 aa).

This sequence belongs to the urease gamma subunit family. In terms of assembly, heterotrimer of UreA (gamma), UreB (beta) and UreC (alpha) subunits. Three heterotrimers associate to form the active enzyme.

The protein localises to the cytoplasm. The enzyme catalyses urea + 2 H2O + H(+) = hydrogencarbonate + 2 NH4(+). The protein operates within nitrogen metabolism; urea degradation; CO(2) and NH(3) from urea (urease route): step 1/1. The polypeptide is Urease subunit gamma (Pseudoalteromonas translucida (strain TAC 125)).